The sequence spans 120 residues: Spermidine export protein MdtJ (120 aa).

Helical transmembrane passes span 1 to 21 (MFYW…TLSM), 31 to 51 (AGYI…SFAV), 54 to 74 (IALG…ITVF), and 81 to 101 (EVLS…IVLI).

It belongs to the drug/metabolite transporter (DMT) superfamily. Small multidrug resistance (SMR) (TC 2.A.7.1) family. MdtJ subfamily. In terms of assembly, forms a complex with MdtI.

The protein localises to the cell inner membrane. In terms of biological role, catalyzes the excretion of spermidine. In Salmonella arizonae (strain ATCC BAA-731 / CDC346-86 / RSK2980), this protein is Spermidine export protein MdtJ.